The sequence spans 654 residues: tRNA 5-methylaminomethyl-2-thiouridine biosynthesis bifunctional protein MnmC (654 aa).

Residues Met1–Thr236 form a tRNA (mnm(5)s(2)U34)-methyltransferase region. The interval Ile262 to Lys654 is FAD-dependent cmnm(5)s(2)U34 oxidoreductase.

This sequence in the N-terminal section; belongs to the methyltransferase superfamily. tRNA (mnm(5)s(2)U34)-methyltransferase family. In the C-terminal section; belongs to the DAO family. It depends on FAD as a cofactor.

The protein resides in the cytoplasm. The enzyme catalyses 5-aminomethyl-2-thiouridine(34) in tRNA + S-adenosyl-L-methionine = 5-methylaminomethyl-2-thiouridine(34) in tRNA + S-adenosyl-L-homocysteine + H(+). Its function is as follows. Catalyzes the last two steps in the biosynthesis of 5-methylaminomethyl-2-thiouridine (mnm(5)s(2)U) at the wobble position (U34) in tRNA. Catalyzes the FAD-dependent demodification of cmnm(5)s(2)U34 to nm(5)s(2)U34, followed by the transfer of a methyl group from S-adenosyl-L-methionine to nm(5)s(2)U34, to form mnm(5)s(2)U34. The polypeptide is tRNA 5-methylaminomethyl-2-thiouridine biosynthesis bifunctional protein MnmC (Pseudomonas entomophila (strain L48)).